The sequence spans 141 residues: Nucleoside diphosphate kinase 1 (141 aa).

Positions 11, 59, 87, 93, 104, and 114 each coordinate ATP. The Pros-phosphohistidine intermediate role is filled by His117.

The protein belongs to the NDK family. As to quaternary structure, homotetramer. Mg(2+) serves as cofactor.

The protein resides in the cytoplasm. It carries out the reaction a 2'-deoxyribonucleoside 5'-diphosphate + ATP = a 2'-deoxyribonucleoside 5'-triphosphate + ADP. It catalyses the reaction a ribonucleoside 5'-diphosphate + ATP = a ribonucleoside 5'-triphosphate + ADP. In terms of biological role, major role in the synthesis of nucleoside triphosphates other than ATP. The ATP gamma phosphate is transferred to the NDP beta phosphate via a ping-pong mechanism, using a phosphorylated active-site intermediate. This is Nucleoside diphosphate kinase 1 from Protochlamydia amoebophila (strain UWE25).